The sequence spans 260 residues: Resolvase (260 aa).

The Tyr recombinase domain occupies 38–241 (ELPKYLLAPE…FALDVAARHR (204 aa)). Active-site residues include arginine 73, lysine 105, histidine 193, arginine 196, and histidine 219. Tyrosine 228 acts as the O-(3'-phospho-DNA)-tyrosine intermediate in catalysis.

It belongs to the 'phage' integrase family.

In terms of biological role, this resolvase acts at the RfsF equivalent resolution sequence of pColBM-CL139. The protein is Resolvase (resD) of Escherichia coli.